The primary structure comprises 229 residues: Zinc finger matrin-type protein 4 (229 aa).

4 consecutive Matrin-type zinc fingers follow at residues 14–44 (SYCK…KVRL), 72–106 (DKNK…LKLL), 145–175 (RYCG…NAAR), and 198–228 (YRCT…NLKN).

The protein localises to the nucleus. This is Zinc finger matrin-type protein 4 (Zmat4) from Mus musculus (Mouse).